The primary structure comprises 390 residues: Branched-chain-amino-acid aminotransferase (390 aa).

K225 carries the post-translational modification N6-(pyridoxal phosphate)lysine.

Belongs to the class-IV pyridoxal-phosphate-dependent aminotransferase family. Homodimer. Requires pyridoxal 5'-phosphate as cofactor.

The enzyme catalyses L-leucine + 2-oxoglutarate = 4-methyl-2-oxopentanoate + L-glutamate. It catalyses the reaction L-isoleucine + 2-oxoglutarate = (S)-3-methyl-2-oxopentanoate + L-glutamate. The catalysed reaction is L-valine + 2-oxoglutarate = 3-methyl-2-oxobutanoate + L-glutamate. Its function is as follows. Catalyzes the first reaction in the catabolism of the essential branched chain amino acids leucine, isoleucine, and valine. This Monosiga brevicollis (Choanoflagellate) protein is Branched-chain-amino-acid aminotransferase.